Reading from the N-terminus, the 381-residue chain is Protein TRIGALACTOSYLDIACYLGLYCEROL 2, chloroplastic (381 aa).

The N-terminal 45 residues, 1–45 (MIGNPVIQVPSSLMPSSSMIACPRVSPNGVPYLPPKPRTRHLVVR), are a transit peptide targeting the chloroplast. Over 46 to 96 (AASNSDAAHGQPSSDGGKNPLTVVLDVPRNIWRQTLKPLSDFGFGKRSIWE) the chain is Stromal. A helical transmembrane segment spans residues 97–117 (GGVGLFIVSGATLLALSWAWL). Over 118–381 (RGFQMRSKFR…LLIKSLSRLL (264 aa)) the chain is Chloroplast intermembrane.

In terms of assembly, homomultimer. Substrate-binding subunit of the TGD complex, a lipid translocator at the inner chloroplast envelope membrane made of TGD1, TGD2 and TGD3. Interacts with TGD1 and TGD3 with an overall subunit stoichiometry of 2 TGD1, 2 TGD3 and 8 to 12 TGD2. Interacts with TGD5.

It is found in the plastid. The protein resides in the chloroplast inner membrane. Its function is as follows. Component of a phosphatidic acid/lipid transport complex in the chloroplast envelope. Specifically binds phosphatidic acid (PA). Involved in lipid transfer from the endoplasmic reticulum (ER) to plastids, and necessary for thylakoids formation. The polypeptide is Protein TRIGALACTOSYLDIACYLGLYCEROL 2, chloroplastic (Arabidopsis thaliana (Mouse-ear cress)).